A 296-amino-acid chain; its full sequence is Glycine--tRNA ligase alpha subunit (296 aa).

The protein belongs to the class-II aminoacyl-tRNA synthetase family. As to quaternary structure, tetramer of two alpha and two beta subunits.

The protein localises to the cytoplasm. It carries out the reaction tRNA(Gly) + glycine + ATP = glycyl-tRNA(Gly) + AMP + diphosphate. The sequence is that of Glycine--tRNA ligase alpha subunit from Synechococcus sp. (strain WH7803).